The sequence spans 402 residues: MSRVSQARNLGKYFLLIDNMLVVLGFFVVFPLISIRFVDQMGWAAVMVGIALGLRQFIQQGLGIFGGAIADRFGAKPMIVTGMLMRAAGFATMGIAHEPWLLWFSCLLSGLGGTLFDPPRSALVVKLIRPQQRGRFFSLLMMQDSAGAVIGALLGSWLLQYDFRLVCATGAVLFVLCAAFNAWLLPAWKLSTVRTPVREGMTRVMRDKRFVTYVLTLAGYYMLAVQVMLMLPIMVNDVAGAPSAVKWMYAIEACLSLTLLYPIARWSEKHFRLEHRLMAGLLIMSLSMMPVGMVSGLQQLFTLICLFYIGSIIAEPARETLSASLADARARGSYMGFSRLGLAIGGAIGYIGGGWLFDLGKSAHQPELPWMMLGIIGIFTFLALGWQFSQKRTARRLLERDA.

At 1–12 the chain is on the cytoplasmic side; it reads MSRVSQARNLGK. The chain crosses the membrane as a helical span at residues 13-33; that stretch reads YFLLIDNMLVVLGFFVVFPLI. Topologically, residues 34 to 98 are periplasmic; that stretch reads SIRFVDQMGW…GFATMGIAHE (65 aa). Residues 99-116 traverse the membrane as a helical segment; that stretch reads PWLLWFSCLLSGLGGTLF. Residues 117-138 lie on the Cytoplasmic side of the membrane; it reads DPPRSALVVKLIRPQQRGRFFS. The helical transmembrane segment at 139 to 159 threads the bilayer; sequence LLMMQDSAGAVIGALLGSWLL. Topologically, residues 160-164 are periplasmic; that stretch reads QYDFR. A helical membrane pass occupies residues 165–185; sequence LVCATGAVLFVLCAAFNAWLL. Over 186–213 the chain is Cytoplasmic; the sequence is PAWKLSTVRTPVREGMTRVMRDKRFVTY. Residues 214–234 traverse the membrane as a helical segment; the sequence is VLTLAGYYMLAVQVMLMLPIM. Over 235-243 the chain is Periplasmic; that stretch reads VNDVAGAPS. Residues 244–264 traverse the membrane as a helical segment; sequence AVKWMYAIEACLSLTLLYPIA. The Cytoplasmic portion of the chain corresponds to 265–276; the sequence is RWSEKHFRLEHR. A helical membrane pass occupies residues 277–297; that stretch reads LMAGLLIMSLSMMPVGMVSGL. At 298–299 the chain is on the periplasmic side; sequence QQ. A helical transmembrane segment spans residues 300 to 320; it reads LFTLICLFYIGSIIAEPARET. The Cytoplasmic portion of the chain corresponds to 321–339; that stretch reads LSASLADARARGSYMGFSR. A helical membrane pass occupies residues 340–360; sequence LGLAIGGAIGYIGGGWLFDLG. The Periplasmic portion of the chain corresponds to 361–367; that stretch reads KSAHQPE. The helical transmembrane segment at 368-388 threads the bilayer; sequence LPWMMLGIIGIFTFLALGWQF. Residues 389–402 lie on the Cytoplasmic side of the membrane; it reads SQKRTARRLLERDA.

Belongs to the major facilitator superfamily. DHA1 family. MdtH (TC 2.A.1.2.21) subfamily.

It localises to the cell inner membrane. Its function is as follows. Confers resistance to norfloxacin and enoxacin. The polypeptide is Multidrug resistance protein MdtH (Escherichia coli O7:K1 (strain IAI39 / ExPEC)).